A 305-amino-acid chain; its full sequence is UDP-3-O-acyl-N-acetylglucosamine deacetylase (305 aa).

Zn(2+) contacts are provided by His-78, His-237, and Asp-241. His-264 (proton donor) is an active-site residue.

Belongs to the LpxC family. Zn(2+) serves as cofactor.

It carries out the reaction a UDP-3-O-[(3R)-3-hydroxyacyl]-N-acetyl-alpha-D-glucosamine + H2O = a UDP-3-O-[(3R)-3-hydroxyacyl]-alpha-D-glucosamine + acetate. Its pathway is glycolipid biosynthesis; lipid IV(A) biosynthesis; lipid IV(A) from (3R)-3-hydroxytetradecanoyl-[acyl-carrier-protein] and UDP-N-acetyl-alpha-D-glucosamine: step 2/6. In terms of biological role, catalyzes the hydrolysis of UDP-3-O-myristoyl-N-acetylglucosamine to form UDP-3-O-myristoylglucosamine and acetate, the committed step in lipid A biosynthesis. In Dechloromonas aromatica (strain RCB), this protein is UDP-3-O-acyl-N-acetylglucosamine deacetylase.